Consider the following 211-residue polypeptide: Large ribosomal subunit protein uL4 (211 aa).

The tract at residues glutamine 40–glycine 85 is disordered. Residues glutamine 41 to arginine 54 show a composition bias toward polar residues. Residues glycine 60–glycine 71 are compositionally biased toward basic residues.

This sequence belongs to the universal ribosomal protein uL4 family. In terms of assembly, part of the 50S ribosomal subunit.

One of the primary rRNA binding proteins, this protein initially binds near the 5'-end of the 23S rRNA. It is important during the early stages of 50S assembly. It makes multiple contacts with different domains of the 23S rRNA in the assembled 50S subunit and ribosome. Its function is as follows. Forms part of the polypeptide exit tunnel. The protein is Large ribosomal subunit protein uL4 of Prochlorococcus marinus (strain NATL2A).